A 414-amino-acid polypeptide reads, in one-letter code: 2,3-diketo-5-methylthiopentyl-1-phosphate enolase (414 aa).

The active-site Proton acceptor is the Lys99. Substrate is bound by residues Lys148, 174–177 (KDDE), His265, Gly338, and 360–361 (GG). Mg(2+) is bound by residues Lys174, Asp176, and Glu177. N6-carboxylysine is present on Lys174.

Belongs to the RuBisCO large chain family. Type IV subfamily. In terms of assembly, homodimer. Requires Mg(2+) as cofactor.

It catalyses the reaction 5-methylsulfanyl-2,3-dioxopentyl phosphate = 2-hydroxy-5-methylsulfanyl-3-oxopent-1-enyl phosphate. Its pathway is amino-acid biosynthesis; L-methionine biosynthesis via salvage pathway; L-methionine from S-methyl-5-thio-alpha-D-ribose 1-phosphate: step 3/6. Functionally, catalyzes the enolization of 2,3-diketo-5-methylthiopentyl-1-phosphate (DK-MTP-1-P) into 2-hydroxy-3-keto-5-methylthiopentenyl-1-phosphate (HK-MTPenyl-1-P). In Bacillus thuringiensis (strain Al Hakam), this protein is 2,3-diketo-5-methylthiopentyl-1-phosphate enolase.